We begin with the raw amino-acid sequence, 387 residues long: Pepsin-3 (387 aa).

The signal sequence occupies residues 1–15 (MKWLLLLGLLALSEC). Positions 16–59 (IIHKVPLVRKKSLRKNLIEKGLLKDYLKTHTPNLATKYLPKAAF) are cleaved as a propeptide — activation peptide. Residues 75 to 384 (YFGTIGIGTP…DRANNQLGLA (310 aa)) enclose the Peptidase A1 domain. Aspartate 93 is an active-site residue. 2 cysteine pairs are disulfide-bonded: cysteine 106–cysteine 111 and cysteine 267–cysteine 271. Aspartate 276 is an active-site residue. Cysteines 310 and 343 form a disulfide.

Belongs to the peptidase A1 family.

The protein localises to the secreted. It catalyses the reaction Preferential cleavage: hydrophobic, preferably aromatic, residues in P1 and P1' positions. Cleaves 1-Phe-|-Val-2, 4-Gln-|-His-5, 13-Glu-|-Ala-14, 14-Ala-|-Leu-15, 15-Leu-|-Tyr-16, 16-Tyr-|-Leu-17, 23-Gly-|-Phe-24, 24-Phe-|-Phe-25 and 25-Phe-|-Tyr-26 bonds in the B chain of insulin.. Its function is as follows. Shows particularly broad specificity; although bonds involving phenylalanine and leucine are preferred, many others are also cleaved to some extent. The polypeptide is Pepsin-3 (Oryctolagus cuniculus (Rabbit)).